Reading from the N-terminus, the 568-residue chain is MARVEL domain-containing protein 2 (568 aa).

2 disordered regions span residues Met1–Asp72 and Ser116–Ser163. Topologically, residues Met1–Arg211 are cytoplasmic. Residues Ala29–Leu46 show a composition bias toward basic and acidic residues. The span at Pro52 to Pro62 shows a compositional bias: pro residues. The region spanning Ser205–Arg379 is the MARVEL domain. The helical transmembrane segment at Ile212–Ile232 threads the bilayer. Over His233 to Pro266 the chain is Extracellular. The helical transmembrane segment at Phe267–Met287 threads the bilayer. The Cytoplasmic segment spans residues Ser288–Leu303. A helical membrane pass occupies residues Thr304 to Val324. The Extracellular portion of the chain corresponds to Asn325 to Thr354. Residues Ala355–Leu375 form a helical membrane-spanning segment. Topologically, residues Lys376–Asn568 are cytoplasmic. In terms of domain architecture, OCEL spans Pro451–Asp562. Residues Ala462–Lys559 are a coiled coil.

Belongs to the ELL/occludin family.

It localises to the cell membrane. The protein localises to the cell junction. It is found in the tight junction. Functionally, may play a role in the formation of the epithelial barrier. The polypeptide is MARVEL domain-containing protein 2 (marveld2) (Xenopus tropicalis (Western clawed frog)).